Reading from the N-terminus, the 441-residue chain is UDP-N-acetylmuramoylalanine--D-glutamate ligase (441 aa).

129-135 (GTNGKST) is a binding site for ATP.

Belongs to the MurCDEF family.

The protein resides in the cytoplasm. It catalyses the reaction UDP-N-acetyl-alpha-D-muramoyl-L-alanine + D-glutamate + ATP = UDP-N-acetyl-alpha-D-muramoyl-L-alanyl-D-glutamate + ADP + phosphate + H(+). It functions in the pathway cell wall biogenesis; peptidoglycan biosynthesis. Cell wall formation. Catalyzes the addition of glutamate to the nucleotide precursor UDP-N-acetylmuramoyl-L-alanine (UMA). The protein is UDP-N-acetylmuramoylalanine--D-glutamate ligase of Zymomonas mobilis subsp. mobilis (strain ATCC 31821 / ZM4 / CP4).